We begin with the raw amino-acid sequence, 510 residues long: Probable cytochrome P450 312a1 (510 aa).

Cys-455 provides a ligand contact to heme.

It belongs to the cytochrome P450 family. It depends on heme as a cofactor.

It localises to the endoplasmic reticulum membrane. It is found in the microsome membrane. Functionally, may be involved in the metabolism of insect hormones and in the breakdown of synthetic insecticides. This is Probable cytochrome P450 312a1 (Cyp312a1) from Drosophila melanogaster (Fruit fly).